Here is a 664-residue protein sequence, read N- to C-terminus: Sulfoquinovosidase (664 aa).

Residues glutamate 135, glutamate 270, arginine 283, leucine 284, and tryptophan 286 each contribute to the 3-(6-sulfo-alpha-D-quinovosyl)glycerol site. Aspartate 388 serves as the catalytic Nucleophile. Glutamate 391 is a catalytic residue. Arginine 438 lines the 3-(6-sulfo-alpha-D-quinovosyl)glycerol pocket. Aspartate 455 functions as the Proton donor in the catalytic mechanism. Histidine 520 provides a ligand contact to 3-(6-sulfo-alpha-D-quinovosyl)glycerol.

This sequence belongs to the glycosyl hydrolase 31 family.

The enzyme catalyses 3-(6-sulfo-alpha-D-quinovosyl)glycerol + H2O = 6-sulfo-alpha-D-quinovose + glycerol. Functionally, part of the sulfoquinovose monooxygenase (sulfo-SMO) pathway, a D-sulfoquinovose degradation pathway that enables the complete utilization of all carbons within sulfoquinovose (SQ) with concomitant production of inorganic sulfite. Catalyzes the first step of the pathway, the hydrolysis of sulfoquinovosyl glycerol (SQGro) to release sulfoquinovose (SQ). Hydrolyzes both epimers of SQGro, with a preference for the natural 2'R isomer. In vitro, can use the substrate analog para-nitrophenyl alpha-sulfoquinovoside (PNPSQ), but shows no detectable activity toward 4-nitrophenyl alpha-D-glucopyranoside (PNPGlc). This is Sulfoquinovosidase from Agrobacterium fabrum (strain C58 / ATCC 33970) (Agrobacterium tumefaciens (strain C58)).